Reading from the N-terminus, the 294-residue chain is MSLARFTQPRVLLPVVAAATSIGLVYHYSSLSIQNDTAKTFKGGDEWIDLKLKKSWDVSSNTRHFVFELKSPEDVSGLVTASCLMTKFVTAKGNNVIRPYTPVSDVDQKGTIDFVIKKYDGGKMSTHFHGLKEGDTVSFKGPIVKWKWEPNQFQSIALIGGGTGITPLYQLLHEITKNPEDKTKVKLFYGNLTEEDILIKKELDDIAEKHKDQVSITYFVDKASANWKGETGHIDKEFLQSNLPGPSKDSKVFVCGPPGLYKALSGVKVSPTDQGEVTGVLAELGYTKENVYKF.

The helical transmembrane segment at 11–27 (VLLPVVAAATSIGLVYH) threads the bilayer. Positions 45–149 (DEWIDLKLKK…KGPIVKWKWE (105 aa)) constitute an FAD-binding FR-type domain. Residue 152 to 187 (QFQSIALIGGGTGITPLYQLLHEITKNPEDKTKVKL) participates in FAD binding.

This sequence belongs to the flavoprotein pyridine nucleotide cytochrome reductase family. Requires FAD as cofactor.

It is found in the mitochondrion outer membrane. The catalysed reaction is 2 Fe(III)-[cytochrome b5] + NADH = 2 Fe(II)-[cytochrome b5] + NAD(+) + H(+). Functionally, may mediate the reduction of outer membrane cytochrome b5. The chain is NADH-cytochrome b5 reductase 2 (MCR1) from Meyerozyma guilliermondii (strain ATCC 6260 / CBS 566 / DSM 6381 / JCM 1539 / NBRC 10279 / NRRL Y-324) (Yeast).